Here is a 614-residue protein sequence, read N- to C-terminus: Phosphomethylpyrimidine synthase (614 aa).

A compositionally biased stretch (low complexity) spans 1-16; it reads MNAQLSALQQQAQQLS. The interval 1–36 is disordered; it reads MNAQLSALQQQAQQLSESVTRPIPGSRKIHVPGSRP. Residues asparagine 230, methionine 259, tyrosine 288, histidine 324, 344-346, 385-388, and glutamate 424 each bind substrate; these read SRG and DGLR. Histidine 428 is a Zn(2+) binding site. Tyrosine 451 is a substrate binding site. Residue histidine 492 participates in Zn(2+) binding. [4Fe-4S] cluster is bound by residues cysteine 572, cysteine 575, and cysteine 580.

The protein belongs to the ThiC family. Homodimer. Requires [4Fe-4S] cluster as cofactor.

It catalyses the reaction 5-amino-1-(5-phospho-beta-D-ribosyl)imidazole + S-adenosyl-L-methionine = 4-amino-2-methyl-5-(phosphooxymethyl)pyrimidine + CO + 5'-deoxyadenosine + formate + L-methionine + 3 H(+). The protein operates within cofactor biosynthesis; thiamine diphosphate biosynthesis. In terms of biological role, catalyzes the synthesis of the hydroxymethylpyrimidine phosphate (HMP-P) moiety of thiamine from aminoimidazole ribotide (AIR) in a radical S-adenosyl-L-methionine (SAM)-dependent reaction. The sequence is that of Phosphomethylpyrimidine synthase from Stenotrophomonas maltophilia (strain R551-3).